The following is a 253-amino-acid chain: Type III pantothenate kinase (253 aa).

6–13 (DVGNTNIV) lines the ATP pocket. A substrate-binding site is contributed by 107–110 (GADR). Asp109 functions as the Proton acceptor in the catalytic mechanism. Asp129 serves as a coordination point for K(+). Residue Thr132 coordinates ATP. Thr184 is a substrate binding site.

The protein belongs to the type III pantothenate kinase family. In terms of assembly, homodimer. It depends on NH4(+) as a cofactor. K(+) is required as a cofactor.

The protein localises to the cytoplasm. The enzyme catalyses (R)-pantothenate + ATP = (R)-4'-phosphopantothenate + ADP + H(+). The protein operates within cofactor biosynthesis; coenzyme A biosynthesis; CoA from (R)-pantothenate: step 1/5. Functionally, catalyzes the phosphorylation of pantothenate (Pan), the first step in CoA biosynthesis. The polypeptide is Type III pantothenate kinase (Exiguobacterium sibiricum (strain DSM 17290 / CCUG 55495 / CIP 109462 / JCM 13490 / 255-15)).